A 235-amino-acid polypeptide reads, in one-letter code: Small heat shock protein, chloroplastic (235 aa).

2 disordered regions span residues 1-23 and 51-80; these read MAYT…TSKI and TGDN…ERRP. A compositionally biased stretch (basic and acidic residues) spans 52-63; sequence GDNKDTSVDVHH. Residues 64 to 74 show a composition bias toward polar residues; sequence SSAQGGNNQGT. The sHSP domain occupies 126 to 235; sequence SGTGEIRTPW…EKKVIDVQIN (110 aa).

This sequence belongs to the small heat shock protein (HSP20) family. In fruits, flowers, leaves, and stems.

The protein resides in the plastid. Its subcellular location is the chloroplast. The protein is Small heat shock protein, chloroplastic (HSP21) of Solanum lycopersicum (Tomato).